Here is a 411-residue protein sequence, read N- to C-terminus: Probable phosphatase HAD1 (411 aa).

The segment covering 14–23 (LPSPNTSQPP) has biased composition (polar residues). Positions 14–33 (LPSPNTSQPPSAAPSRRGSF) are disordered. The active-site Nucleophile is the D61. The Mg(2+) site is built by D61, D63, and D338. The Proton donor role is filled by D63. The tract at residues 296–386 (PRPTPDVTPV…QSGQAGVTLD (91 aa)) is disordered. Residues 326-345 (VRNTQTIMKGSDDLTGNDSV) are compositionally biased toward polar residues. Over residues 362–373 (SVEKRAEMEFHR) the composition is skewed to basic and acidic residues.

This sequence belongs to the HAD-like hydrolase superfamily. Post-translationally, phosphorylated.

Its function is as follows. Probable phosphatase. Required for cell wall integrity and virulence. The polypeptide is Probable phosphatase HAD1 (Cryptococcus neoformans var. grubii serotype A (strain H99 / ATCC 208821 / CBS 10515 / FGSC 9487) (Filobasidiella neoformans var. grubii)).